A 173-amino-acid polypeptide reads, in one-letter code: Ribosome maturation factor RimP (173 aa).

Belongs to the RimP family.

The protein resides in the cytoplasm. Functionally, required for maturation of 30S ribosomal subunits. This Pelodictyon phaeoclathratiforme (strain DSM 5477 / BU-1) protein is Ribosome maturation factor RimP.